Consider the following 415-residue polypeptide: Transcription termination factor Rho (415 aa).

In terms of domain architecture, Rho RNA-BD spans 52–119; it reads ADIASGVLDI…TDVVRVNGRT (68 aa). ATP is bound by residues 161 to 166, 173 to 178, and R204; these read GKGQRG and KTGKTV.

This sequence belongs to the Rho family. In terms of assembly, homohexamer. The homohexamer assembles into an open ring structure.

Facilitates transcription termination by a mechanism that involves Rho binding to the nascent RNA, activation of Rho's RNA-dependent ATPase activity, and release of the mRNA from the DNA template. The sequence is that of Transcription termination factor Rho from Streptomyces coelicolor (strain ATCC BAA-471 / A3(2) / M145).